Consider the following 1390-residue polypeptide: DNA-directed RNA polymerase subunit beta' (1390 aa).

4 residues coordinate Zn(2+): Cys-73, Cys-75, Cys-88, and Cys-91. Residues Asp-464, Asp-466, and Asp-468 each coordinate Mg(2+). Positions 810, 884, 891, and 894 each coordinate Zn(2+). The tract at residues 1365–1390 (EKKEQKIYGNGEEPAKEQKWIPQAGT) is disordered.

The protein belongs to the RNA polymerase beta' chain family. The RNAP catalytic core consists of 2 alpha, 1 beta, 1 beta' and 1 omega subunit. When a sigma factor is associated with the core the holoenzyme is formed, which can initiate transcription. Requires Mg(2+) as cofactor. Zn(2+) serves as cofactor.

It carries out the reaction RNA(n) + a ribonucleoside 5'-triphosphate = RNA(n+1) + diphosphate. In terms of biological role, DNA-dependent RNA polymerase catalyzes the transcription of DNA into RNA using the four ribonucleoside triphosphates as substrates. This is DNA-directed RNA polymerase subunit beta' from Methylacidiphilum infernorum (isolate V4) (Methylokorus infernorum (strain V4)).